The sequence spans 547 residues: Auxin transporter-like protein 3 (547 aa).

Residues 1–74 are Cytoplasmic-facing; sequence MASGSSGGGY…DAWFSCASNQ (74 aa). A helical membrane pass occupies residues 75 to 92; sequence VAQVLLTLPYSFAQLGMA. Residues 93–94 are Extracellular-facing; the sequence is SG. Residues 95–115 form a helical membrane-spanning segment; it reads LLFQLFYGLLGSWTAYLISIL. Over 116–151 the chain is Cytoplasmic; it reads YLEYRTRKERDKVDFRNHVIQWFEVLDGLLGRHWRN. Residues 152-172 traverse the membrane as a helical segment; sequence VGLAFNCTFLLFGSVIQLIGC. Over 173–187 the chain is Extracellular; the sequence is ASNIYYINDHLDKRT. The helical transmembrane segment at 188 to 208 threads the bilayer; it reads WTYIFGACCATTVFIPSFHNY. Residues 209–211 are Cytoplasmic-facing; that stretch reads RIW. The chain crosses the membrane as a helical span at residues 212-232; it reads SFLGLLMTTYTAWYIAVASLI. The Extracellular portion of the chain corresponds to 233–247; it reads HGQVEGVAHSGPTSI. Residues 248 to 268 traverse the membrane as a helical segment; sequence VLYFTGATNILYTFGGHAVTV. Residues 269–281 lie on the Cytoplasmic side of the membrane; the sequence is EIMHAMWRPQKFK. A helical transmembrane segment spans residues 282–302; sequence AIYLLATVYVLTLTLPSASAA. Residues 303-329 are Extracellular-facing; the sequence is YWAFGDALLTHSNALALLPRTPWRDAA. Residues 330-350 form a helical membrane-spanning segment; that stretch reads VVLMLIHQFITFGFACTPLYF. Residues 351–371 lie on the Cytoplasmic side of the membrane; sequence VWEKLVGLHGCPSLCKRAAAR. A helical membrane pass occupies residues 372 to 392; sequence LPVVLPIWFLAIIFPFFGPIN. Residue Ser393 is a topological domain, extracellular. A helical membrane pass occupies residues 394-414; sequence AVGSLLVSFTVYIIPSLAYMV. At 415–440 the chain is on the cytoplasmic side; that stretch reads TFRSPQSRQNAVERPPRFAGGWTGAY. The chain crosses the membrane as a helical span at residues 441–461; sequence VINSFVVAWVLVVGFGFGGWA. The Extracellular portion of the chain corresponds to 462-547; sequence SITNFVHQVD…HHHRHHRHGL (86 aa). N-linked (GlcNAc...) asparagine glycosylation occurs at Asn509.

This sequence belongs to the amino acid/polyamine transporter 2 family. Amino acid/auxin permease (AAAP) (TC 2.A.18.1) subfamily.

Its subcellular location is the cell membrane. In terms of biological role, carrier protein involved in proton-driven auxin influx. May mediate the formation of auxin gradient from developing leaves (site of auxin biosynthesis) to tips. The polypeptide is Auxin transporter-like protein 3 (Oryza sativa subsp. japonica (Rice)).